We begin with the raw amino-acid sequence, 539 residues long: Eukaryotic translation initiation factor 3 subunit L (539 aa).

The PCI domain maps to 306-514 (TFSDILLYIQ…IHIADTKVSH (209 aa)).

Belongs to the eIF-3 subunit L family. Component of the eukaryotic translation initiation factor 3 (eIF-3) complex. The eIF-3 complex interacts with pix.

Its subcellular location is the cytoplasm. In terms of biological role, component of the eukaryotic translation initiation factor 3 (eIF-3) complex, which is involved in protein synthesis of a specialized repertoire of mRNAs and, together with other initiation factors, stimulates binding of mRNA and methionyl-tRNAi to the 40S ribosome. The eIF-3 complex specifically targets and initiates translation of a subset of mRNAs involved in cell proliferation. This is Eukaryotic translation initiation factor 3 subunit L from Drosophila yakuba (Fruit fly).